Reading from the N-terminus, the 374-residue chain is Ribosomal large subunit pseudouridine synthase D (374 aa).

The segment at 1–20 (MQNTSFDNESDYSDDSDFAS) is disordered. Acidic residues predominate over residues 8–17 (NESDYSDDSD). The region spanning 39–112 (GRLDAVLAKL…MALDIVYEDD (74 aa)) is the S4 RNA-binding domain. The active site involves aspartate 160.

Belongs to the pseudouridine synthase RluA family.

The protein localises to the cytoplasm. The enzyme catalyses uridine(1911/1915/1917) in 23S rRNA = pseudouridine(1911/1915/1917) in 23S rRNA. Its function is as follows. Responsible for synthesis of pseudouridine from uracil at positions 1911, 1915 and 1917 in 23S ribosomal RNA. This chain is Ribosomal large subunit pseudouridine synthase D (rluD), found in Neisseria meningitidis serogroup A / serotype 4A (strain DSM 15465 / Z2491).